Reading from the N-terminus, the 939-residue chain is Translation initiation factor IF-2 (939 aa).

A disordered region spans residues 48-355 (KFAPAPKVEN…KPEKKEKEEE (308 aa)). Positions 79-93 (QQNQAPKQPQQGTQN) are enriched in low complexity. The segment covering 114–130 (SRDKNSRRDNNNRDGQR) has biased composition (basic and acidic residues). Residues 131–257 (DNNGGYRNND…NNDRNNNGGF (127 aa)) show a composition bias toward low complexity. Over residues 287-355 (RNNDRRDSAP…KPEKKEKEEE (69 aa)) the composition is skewed to basic and acidic residues. A tr-type G domain is found at 440 to 609 (PRPPVVCVMG…LLTAEVNELK (170 aa)). Residues 449 to 456 (GHVDHGKT) are G1. Residue 449–456 (GHVDHGKT) coordinates GTP. Residues 474–478 (GITQK) are G2. A G3 region spans residues 495 to 498 (DTPG). GTP is bound by residues 495-499 (DTPGH) and 549-552 (NKID). The tract at residues 549 to 552 (NKID) is G4. The tract at residues 585-587 (SAH) is G5.

It belongs to the TRAFAC class translation factor GTPase superfamily. Classic translation factor GTPase family. IF-2 subfamily.

It localises to the cytoplasm. One of the essential components for the initiation of protein synthesis. Protects formylmethionyl-tRNA from spontaneous hydrolysis and promotes its binding to the 30S ribosomal subunits. Also involved in the hydrolysis of GTP during the formation of the 70S ribosomal complex. The sequence is that of Translation initiation factor IF-2 from Lachnospira eligens (strain ATCC 27750 / DSM 3376 / VPI C15-48 / C15-B4) (Eubacterium eligens).